A 360-amino-acid chain; its full sequence is Protein Wnt-2 (360 aa).

The N-terminal stretch at 1 to 25 (MNAPLGGIWLWLPLLLTWLTPEVSS) is a signal peptide. Disulfide bonds link C76/C87, C127/C135, C137/C157, C206/C220, C208/C215, C278/C309, C294/C304, C308/C348, C324/C339, C326/C336, and C331/C332. Residue S212 is the site of O-palmitoleoyl serine; by PORCN attachment. N295 carries an N-linked (GlcNAc...) asparagine glycan.

Belongs to the Wnt family. In terms of processing, palmitoleoylation is required for efficient binding to frizzled receptors. Depalmitoleoylation leads to Wnt signaling pathway inhibition.

The protein resides in the secreted. The protein localises to the extracellular space. Its subcellular location is the extracellular matrix. Functionally, ligand for members of the frizzled family of seven transmembrane receptors. Functions in the canonical Wnt signaling pathway that results in activation of transcription factors of the TCF/LEF family. This is Protein Wnt-2 (WNT2) from Dasypus novemcinctus (Nine-banded armadillo).